The chain runs to 331 residues: MIARIWSGRSPLYLLLLPLSWLYGLVALLRRQAYRRGWIRVWRAPLPLVVVGNLTAGGNGKTPLVIWLVEQLQRRGYRVGVVSRGYGGRATCYPLVLGPDTRSVECGDEPLLIAQRTGARVAVAPQRSAAVQALLAQEPLDVVITDDGLQHYALARDMELVVIDGERRFGNGWWLPAGPMRERAARLCSVDAVIVNGGLPRTGEIPMALTGHTLVNLRSGERRVAGQFVTPVVAMAGIGHPPRFFHTLTQLGIPLQATHAFADHQAYQAQVLAALTPQAQPLLMTEKDAVKCRAFAQDNWWYLPVSATLPAEAGDRLLARIAALVAAQPRG.

Residue 55–62 coordinates ATP; that stretch reads TAGGNGKT.

Belongs to the LpxK family.

The enzyme catalyses a lipid A disaccharide + ATP = a lipid IVA + ADP + H(+). It functions in the pathway glycolipid biosynthesis; lipid IV(A) biosynthesis; lipid IV(A) from (3R)-3-hydroxytetradecanoyl-[acyl-carrier-protein] and UDP-N-acetyl-alpha-D-glucosamine: step 6/6. In terms of biological role, transfers the gamma-phosphate of ATP to the 4'-position of a tetraacyldisaccharide 1-phosphate intermediate (termed DS-1-P) to form tetraacyldisaccharide 1,4'-bis-phosphate (lipid IVA). This chain is Tetraacyldisaccharide 4'-kinase, found in Edwardsiella ictaluri (strain 93-146).